A 329-amino-acid chain; its full sequence is Serpentine receptor class alpha-2 (329 aa).

Transmembrane regions (helical) follow at residues 25 to 45 (FVYL…VKIL), 57 to 77 (ILLV…GIEA), 104 to 124 (YYKI…GLLI), 144 to 164 (CAVI…LIVW), 188 to 208 (HYFT…TFIL), 240 to 260 (FLTV…IVLV), and 273 to 293 (LLVV…VILV).

Belongs to the nematode receptor-like protein sra family.

Its subcellular location is the membrane. In Caenorhabditis elegans, this protein is Serpentine receptor class alpha-2 (sra-2).